Reading from the N-terminus, the 1441-residue chain is uncharacterized protein (1441 aa).

Disordered regions lie at residues 1 to 95 (MGFL…EVIS), 150 to 204 (NGGI…QQQF), 224 to 289 (KPHQ…GEGE), 401 to 477 (HSNG…QLHQ), 529 to 661 (RHES…QPQQ), 680 to 760 (LNKD…KSQT), 776 to 810 (RKSS…HIQQ), 849 to 899 (QQQF…TQQL), 980 to 1118 (RGGS…DNNN), 1161 to 1185 (KSLK…NENN), 1209 to 1321 (NIES…YRSY), 1348 to 1402 (GHNS…HIFF), and 1421 to 1441 (LKFN…SILE). Over residues 19–38 (NDNSFDGGSSSYNNNNNNNN) the composition is skewed to low complexity. A compositionally biased stretch (polar residues) spans 39 to 56 (QPITYTPTAIRSPNNKTM). Composition is skewed to low complexity over residues 57 to 91 (SQSQ…GNGN), 153 to 187 (ISQP…TTTP), 227 to 283 (QQQQ…SLQN), 416 to 445 (NNNN…GINN), 555 to 564 (GNTDGVNIDN), and 572 to 635 (NNNN…TNNT). The segment covering 636-645 (ATPSVINGDS) has biased composition (polar residues). 2 stretches are compositionally biased toward low complexity: residues 648–661 (QEQP…QPQQ) and 680–700 (LNKD…DDNN). Over residues 703-720 (SREEMENILKKSQQDSNK) the composition is skewed to basic and acidic residues. Residues 729 to 751 (EDSNSGSPTFQDFQSSAAASNVS) are compositionally biased toward polar residues. 2 stretches are compositionally biased toward low complexity: residues 780 to 810 (DSLN…HIQQ) and 849 to 880 (QQQF…NSGS). A compositionally biased stretch (gly residues) spans 881–892 (INGGSNSGGGGV). The segment covering 981–994 (GGSTNRTTPPFLTP) has biased composition (polar residues). The segment covering 995–1067 (NTSQTNLSSL…NKQTANNTTN (73 aa)) has biased composition (low complexity). A compositionally biased stretch (polar residues) spans 1068 to 1087 (DFSFDQNTDLRSSTNSLTIG). Over residues 1088–1118 (SNSNFSSLKNSLNLENPENNNNPDKNVDNNN) the composition is skewed to low complexity. Low complexity-rich tracts occupy residues 1225 to 1249 (DNNN…SLRN) and 1257 to 1291 (NISN…NNNE). Positions 1362–1373 (RHKDSIGDKEMD) are enriched in basic and acidic residues.

This is an uncharacterized protein from Dictyostelium discoideum (Social amoeba).